The chain runs to 161 residues: Putative esterase C31F10.02 (161 aa).

It belongs to the thioesterase PaaI family.

This Schizosaccharomyces pombe (strain 972 / ATCC 24843) (Fission yeast) protein is Putative esterase C31F10.02.